A 351-amino-acid polypeptide reads, in one-letter code: GDP-mannose 4,6-dehydratase (351 aa).

Residues 11-16, 66-67, 88-92, and Tyr-103 each bind NADP(+); these read GVTGQD, DM, and LAAQS. The active site involves Thr-135. Active-site nucleophile residues include Glu-137 and Tyr-159. Residues Lys-163, His-189, and Arg-194 each coordinate NADP(+).

This sequence belongs to the NAD(P)-dependent epimerase/dehydratase family. GDP-mannose 4,6-dehydratase subfamily. Requires NADP(+) as cofactor.

It catalyses the reaction GDP-alpha-D-mannose = GDP-4-dehydro-alpha-D-rhamnose + H2O. It participates in nucleotide-sugar biosynthesis; GDP-L-fucose biosynthesis via de novo pathway; GDP-L-fucose from GDP-alpha-D-mannose: step 1/2. Functionally, catalyzes the conversion of GDP-D-mannose to GDP-4-dehydro-6-deoxy-D-mannose. This chain is GDP-mannose 4,6-dehydratase, found in Sinorhizobium fredii (strain HH103).